Consider the following 323-residue polypeptide: Isoeugenol synthase 1 (323 aa).

NADP(+)-binding positions include 14 to 17, 36 to 47, 88 to 90, 113 to 115, lysine 135, and 155 to 157; these read TGYL, VMPLKKNSDDSK, VPQ, SEF, and NSL. Lysine 135 acts as the Proton donor/acceptor in catalysis.

This sequence belongs to the NmrA-type oxidoreductase family. In terms of tissue distribution, expressed in flowers, especially in corolla and tubes of petals, probably in both epidermal and mesophyll cell layers.

It catalyses the reaction (E)-isoeugenol + acetate + NADP(+) = (E)-coniferyl acetate + NADPH. The protein operates within aromatic compound metabolism; phenylpropanoid biosynthesis. With respect to regulation, inhibited by zinc and copper ions. Repressed by 4-bromo-cinnamyl acetate. Functionally, involved in the biosynthesis of the floral volatile isoeugenol. Catalyzes the synthesis of the phenylpropene isoeugenol from coniferyl acetate. Phenylpropenes are the primary constituents of various essential plant oils. They are produced as antimicrobial and antianimal compounds, or as floral attractants of pollinators. Isoeugenol is a characteristic aromatic constituent of spices and a floral volatile compound. This is Isoeugenol synthase 1 from Petunia hybrida (Petunia).